A 268-amino-acid polypeptide reads, in one-letter code: MRLVVVGANGRMGRELITACQNREDIELSGVLVREKSPFVGQDVSILIGSAPLGIRITDDPENAFSNADGIVDFSQPQASVIHADYAAQKGLVHIIGTTGFSKEEDAQIAISATRTTIVKSENMSLGVNLLANFVKKAAKALGAHDFDIEICEMHHSKKVDAPSGTALLLGNAAAEGRHVALKEVSASGRNGYTGERKKGTIGFACLRGGTVIGDHSVIFAGLNERITFSHSAQERSIFAHGALKAALWAKNYKNGLYSMLDVLELNN.

7-12 (GANGRM) lines the NAD(+) pocket. Arginine 34 contacts NADP(+). Residues 97-99 (GTT) and 121-124 (SENM) contribute to the NAD(+) site. Histidine 155 (proton donor/acceptor) is an active-site residue. Histidine 156 is a (S)-2,3,4,5-tetrahydrodipicolinate binding site. Residue lysine 159 is the Proton donor of the active site. 165–166 (GT) serves as a coordination point for (S)-2,3,4,5-tetrahydrodipicolinate.

It belongs to the DapB family.

The protein resides in the cytoplasm. It carries out the reaction (S)-2,3,4,5-tetrahydrodipicolinate + NAD(+) + H2O = (2S,4S)-4-hydroxy-2,3,4,5-tetrahydrodipicolinate + NADH + H(+). It catalyses the reaction (S)-2,3,4,5-tetrahydrodipicolinate + NADP(+) + H2O = (2S,4S)-4-hydroxy-2,3,4,5-tetrahydrodipicolinate + NADPH + H(+). Its pathway is amino-acid biosynthesis; L-lysine biosynthesis via DAP pathway; (S)-tetrahydrodipicolinate from L-aspartate: step 4/4. In terms of biological role, catalyzes the conversion of 4-hydroxy-tetrahydrodipicolinate (HTPA) to tetrahydrodipicolinate. This is 4-hydroxy-tetrahydrodipicolinate reductase from Bartonella bacilliformis (strain ATCC 35685 / KC583 / Herrer 020/F12,63).